A 184-amino-acid chain; its full sequence is ATP synthase subunit delta (184 aa).

It belongs to the ATPase delta chain family. F-type ATPases have 2 components, F(1) - the catalytic core - and F(0) - the membrane proton channel. F(1) has five subunits: alpha(3), beta(3), gamma(1), delta(1), epsilon(1). F(0) has three main subunits: a(1), b(2) and c(10-14). The alpha and beta chains form an alternating ring which encloses part of the gamma chain. F(1) is attached to F(0) by a central stalk formed by the gamma and epsilon chains, while a peripheral stalk is formed by the delta and b chains.

The protein localises to the cell inner membrane. Its function is as follows. F(1)F(0) ATP synthase produces ATP from ADP in the presence of a proton or sodium gradient. F-type ATPases consist of two structural domains, F(1) containing the extramembraneous catalytic core and F(0) containing the membrane proton channel, linked together by a central stalk and a peripheral stalk. During catalysis, ATP synthesis in the catalytic domain of F(1) is coupled via a rotary mechanism of the central stalk subunits to proton translocation. In terms of biological role, this protein is part of the stalk that links CF(0) to CF(1). It either transmits conformational changes from CF(0) to CF(1) or is implicated in proton conduction. This chain is ATP synthase subunit delta, found in Paramagnetospirillum magneticum (strain ATCC 700264 / AMB-1) (Magnetospirillum magneticum).